The chain runs to 254 residues: Kallikrein-4 (254 aa).

The first 26 residues, 1-26 (MATAGNPWGWFLGYLILGVAGSLVSG), serve as a signal peptide directing secretion. The propeptide occupies 27 to 30 (SCSQ). Residues 31–252 (IINGEDCSPH…FTEWIEKTVQ (222 aa)) form the Peptidase S1 domain. Disulfide bonds link C37-C167, C56-C72, C141-C241, C148-C213, C178-C192, and C203-C228. H40 is a Zn(2+) binding site. Residue H71 is the Charge relay system of the active site. E91 is a binding site for Zn(2+). D116 (charge relay system) is an active-site residue. The N-linked (GlcNAc...) asparagine glycan is linked to N169. S207 serves as the catalytic Charge relay system.

This sequence belongs to the peptidase S1 family. Kallikrein subfamily. In terms of processing, N-glycosylated. The N-glycan structures are of complex diantennary or triantennary type, which may be further modified with up to 2 sialic acid residues. Expressed in prostate.

Its subcellular location is the secreted. Its function is as follows. Has a major role in enamel formation. Required during the maturation stage of tooth development for clearance of enamel proteins and normal structural patterning of the crystalline matrix. This chain is Kallikrein-4 (KLK4), found in Homo sapiens (Human).